Reading from the N-terminus, the 335-residue chain is Phosphatidylinositol:ceramide inositolphosphotransferase (335 aa).

Topologically, residues Met1–Arg21 are cytoplasmic. Residues Phe22–Ala42 form a helical membrane-spanning segment. Topologically, residues Arg43–Asp72 are extracellular. The helical transmembrane segment at Val73–His93 threads the bilayer. At Arg94–Gly98 the chain is on the cytoplasmic side. A helical membrane pass occupies residues Leu99 to Trp119. The Extracellular segment spans residues Asp120–Arg139. The chain crosses the membrane as a helical span at residues Tyr140–Tyr160. Residues Pro161 to Asn179 are Cytoplasmic-facing. Residues Val180–Ser200 traverse the membrane as a helical segment. At Gly201–Thr203 the chain is on the extracellular side. The active site involves His202. A helical membrane pass occupies residues Val204–Phe224. Over Arg225–Trp335 the chain is Cytoplasmic. Residues His245 and Asp249 contribute to the active site.

It belongs to the sphingomyelin synthase family.

Its subcellular location is the membrane. Functionally, bidirectional lipid inositolphosphotransferase capable of converting phosphatidylinositol (PI) and ceramide to inositol-phosphorylceramide (IPC) and diacylglycerol (DAG) and vice versa. Direction is dependent on the relative concentrations of DAG and ceramide as phosphoinositol acceptors. Essential for viability of the pathogenic bloodstream stage of this human protozoan parasite and, consequently, can be considered as potential drug target. The polypeptide is Phosphatidylinositol:ceramide inositolphosphotransferase (Trypanosoma cruzi (strain CL Brener)).